The sequence spans 184 residues: Elongation factor P (184 aa).

It belongs to the elongation factor P family.

The protein localises to the cytoplasm. The protein operates within protein biosynthesis; polypeptide chain elongation. Involved in peptide bond synthesis. Stimulates efficient translation and peptide-bond synthesis on native or reconstituted 70S ribosomes in vitro. Probably functions indirectly by altering the affinity of the ribosome for aminoacyl-tRNA, thus increasing their reactivity as acceptors for peptidyl transferase. The polypeptide is Elongation factor P (Leptothrix cholodnii (strain ATCC 51168 / LMG 8142 / SP-6) (Leptothrix discophora (strain SP-6))).